Here is a 148-residue protein sequence, read N- to C-terminus: Deoxyuridine 5'-triphosphate nucleotidohydrolase (148 aa).

Residues 68–70, Asn81, 85–87, and Lys95 each bind substrate; these read RSG and TVD.

It belongs to the dUTPase family. Mg(2+) serves as cofactor.

It carries out the reaction dUTP + H2O = dUMP + diphosphate + H(+). Its pathway is pyrimidine metabolism; dUMP biosynthesis; dUMP from dCTP (dUTP route): step 2/2. Its function is as follows. This enzyme is involved in nucleotide metabolism: it produces dUMP, the immediate precursor of thymidine nucleotides and it decreases the intracellular concentration of dUTP so that uracil cannot be incorporated into DNA. This is Deoxyuridine 5'-triphosphate nucleotidohydrolase from Caldanaerobacter subterraneus subsp. tengcongensis (strain DSM 15242 / JCM 11007 / NBRC 100824 / MB4) (Thermoanaerobacter tengcongensis).